Consider the following 118-residue polypeptide: Holo-[acyl-carrier-protein] synthase (118 aa).

The Mg(2+) site is built by aspartate 9 and glutamate 52.

The protein belongs to the P-Pant transferase superfamily. AcpS family. It depends on Mg(2+) as a cofactor.

Its subcellular location is the cytoplasm. The enzyme catalyses apo-[ACP] + CoA = holo-[ACP] + adenosine 3',5'-bisphosphate + H(+). Its function is as follows. Transfers the 4'-phosphopantetheine moiety from coenzyme A to a Ser of acyl-carrier-protein. This is Holo-[acyl-carrier-protein] synthase from Frankia alni (strain DSM 45986 / CECT 9034 / ACN14a).